The sequence spans 106 residues: uncharacterized protein (106 aa).

This is an uncharacterized protein from Pyrococcus woesei.